Here is a 461-residue protein sequence, read N- to C-terminus: Bifunctional protein GlmU (461 aa).

The segment at 1–229 (MEKYVVVLAA…FSESLGVNDR (229 aa)) is pyrophosphorylase. Residues 8–11 (LAAG), Lys22, Gln72, and 77–78 (GT) each bind UDP-N-acetyl-alpha-D-glucosamine. Asp102 is a binding site for Mg(2+). Positions 139, 154, 169, and 227 each coordinate UDP-N-acetyl-alpha-D-glucosamine. Asn227 contacts Mg(2+). Residues 230–250 (VALAQATKTMQRRINEAHMRD) form a linker region. The interval 251-461 (GVSFIDPDTA…LPLSKDKDWE (211 aa)) is N-acetyltransferase. UDP-N-acetyl-alpha-D-glucosamine contacts are provided by Arg332 and Lys350. The active-site Proton acceptor is His362. Residues Tyr365 and Asn376 each coordinate UDP-N-acetyl-alpha-D-glucosamine. Acetyl-CoA contacts are provided by residues 385–386 (NY), Ala422, and Arg439.

This sequence in the N-terminal section; belongs to the N-acetylglucosamine-1-phosphate uridyltransferase family. In the C-terminal section; belongs to the transferase hexapeptide repeat family. In terms of assembly, homotrimer. Requires Mg(2+) as cofactor.

The protein resides in the cytoplasm. The catalysed reaction is alpha-D-glucosamine 1-phosphate + acetyl-CoA = N-acetyl-alpha-D-glucosamine 1-phosphate + CoA + H(+). It catalyses the reaction N-acetyl-alpha-D-glucosamine 1-phosphate + UTP + H(+) = UDP-N-acetyl-alpha-D-glucosamine + diphosphate. Its pathway is nucleotide-sugar biosynthesis; UDP-N-acetyl-alpha-D-glucosamine biosynthesis; N-acetyl-alpha-D-glucosamine 1-phosphate from alpha-D-glucosamine 6-phosphate (route II): step 2/2. It functions in the pathway nucleotide-sugar biosynthesis; UDP-N-acetyl-alpha-D-glucosamine biosynthesis; UDP-N-acetyl-alpha-D-glucosamine from N-acetyl-alpha-D-glucosamine 1-phosphate: step 1/1. It participates in bacterial outer membrane biogenesis; LPS lipid A biosynthesis. Catalyzes the last two sequential reactions in the de novo biosynthetic pathway for UDP-N-acetylglucosamine (UDP-GlcNAc). The C-terminal domain catalyzes the transfer of acetyl group from acetyl coenzyme A to glucosamine-1-phosphate (GlcN-1-P) to produce N-acetylglucosamine-1-phosphate (GlcNAc-1-P), which is converted into UDP-GlcNAc by the transfer of uridine 5-monophosphate (from uridine 5-triphosphate), a reaction catalyzed by the N-terminal domain. This is Bifunctional protein GlmU from Lactobacillus helveticus (strain DPC 4571).